The following is a 269-amino-acid chain: MSFDGKQLAHEILLTYKNRDWSQVKLVILQTNNDVSSDAFIRQKMNACNTLGAQSELIKYHESVTEKELLEKIQQLNTDPEVTGIILQLPVYPHLKQNKLLKAIDPYKDVDYLTGNCPLPIRSCVVEAVLILKEHFHHDFTNKQIVVVGLGVTGGGPIFHYLKETGHQVVGCDKHTPNTMELIKTADVVITAIGKPHFFKTTNFKPGVILYDVGVSRNVLNKLCGDIDPNGIEKVAKWWSPTPGGVGPFTVLAIMKNLWVLYEAHQRRI.

NADP(+) is bound by residues 149 to 151 (GLG) and Val-215.

This sequence belongs to the tetrahydrofolate dehydrogenase/cyclohydrolase family. Homodimer.

The catalysed reaction is (6R)-5,10-methylene-5,6,7,8-tetrahydrofolate + NADP(+) = (6R)-5,10-methenyltetrahydrofolate + NADPH. The enzyme catalyses (6R)-5,10-methenyltetrahydrofolate + H2O = (6R)-10-formyltetrahydrofolate + H(+). It functions in the pathway one-carbon metabolism; tetrahydrofolate interconversion. Catalyzes the oxidation of 5,10-methylenetetrahydrofolate to 5,10-methenyltetrahydrofolate and then the hydrolysis of 5,10-methenyltetrahydrofolate to 10-formyltetrahydrofolate. This chain is Bifunctional protein FolD, found in Mycoplasma pneumoniae (strain ATCC 29342 / M129 / Subtype 1) (Mycoplasmoides pneumoniae).